Reading from the N-terminus, the 338-residue chain is Queuosine 5'-phosphate N-glycosylase/hydrolase (338 aa).

N-acetylmethionine is present on M1. Queuine is bound by residues H51, F235, D237, D311, Y312, and D316. Residue D237 is the Nucleophile or transition state stabilizer of the active site.

This sequence belongs to the QNG1 protein family. Highly expressed in liver.

It carries out the reaction queuosine 5'-phosphate + H2O = queuine + D-ribose 5-phosphate. Functionally, catalyzes the hydrolysis of queuosine 5'-phosphate, releasing the nucleobase queuine (q). Is required for salvage of queuine from exogenous queuosine (Q) that is imported and then converted to queuosine 5'-phosphate intracellularly. This is Queuosine 5'-phosphate N-glycosylase/hydrolase from Mus musculus (Mouse).